Here is a 417-residue protein sequence, read N- to C-terminus: Pygopus homolog 1 (417 aa).

A compositionally biased stretch (basic and acidic residues) spans 1–11; that stretch reads MSAEQDKEPIA. Disordered stretches follow at residues 1–71, 175–265, and 284–318; these read MSAE…AANP, HFRQ…MEDP, and ENSRSGSAEATNNHANGTQNKPRQPRGAADLCTPD. The span at 18 to 27 shows a compositional bias: gly residues; it reads GDSGLDGLGG. The Nuclear localization signal signature appears at 35–41; it reads PDKKKRK. 3 stretches are compositionally biased toward polar residues: residues 180–221, 240–256, and 284–305; these read SAEN…TNHS, DFTQGATKTPNQNSSTH, and ENSRSGSAEATNNHANGTQNKP. The PHD-type zinc finger occupies 338–396; it reads VYPCGICTNEVNDDQDAILCEASCQKWFHRICTGMTETAYGLLTAEASAVWGCDTCMAD. Positions 339–386 are interaction with H3K4me2; the sequence is YPCGICTNEVNDDQDAILCEASCQKWFHRICTGMTETAYGLLTAEASA. The interval 371–389 is interaction with BCL9; that stretch reads GMTETAYGLLTAEASAVWG.

As to quaternary structure, interacts with BCL9 via The PHD-type zinc finger motiv, and thereby becomes part of the nuclear beta-catenin/TCF complex. Found in a complex with BCL9L, CDC73, CTNNB1 and PYGO1. Interacts with histone H3 mono-, di- or tri-methylated at 'Lys4' (H3K4me1, H3K4me2, H3K4me3); the interaction is enhanced by the interaction with BCL9.

The protein localises to the nucleus. Its function is as follows. Involved in signal transduction through the Wnt pathway. This is Pygopus homolog 1 (Pygo1) from Mus musculus (Mouse).